The primary structure comprises 148 residues: Glycine cleavage system H protein 5 (148 aa).

The 83-residue stretch at valine 33–lysine 115 folds into the Lipoyl-binding domain. The residue at position 74 (lysine 74) is an N6-lipoyllysine.

This sequence belongs to the GcvH family. The glycine cleavage system is composed of four proteins: P, T, L and H. It depends on (R)-lipoate as a cofactor.

Its function is as follows. The glycine cleavage system catalyzes the degradation of glycine. The H protein shuttles the methylamine group of glycine from the P protein to the T protein. The sequence is that of Glycine cleavage system H protein 5 from Aquifex aeolicus (strain VF5).